The following is a 241-amino-acid chain: Probable xyloglucan-specific endo-beta-1,4-glucanase A (241 aa).

A signal peptide spans 1 to 18 (MKFNLALALSLTVATAEA).

It belongs to the glycosyl hydrolase 12 (cellulase H) family.

The protein resides in the secreted. It catalyses the reaction xyloglucan + H2O = xyloglucan oligosaccharides.. Catalyzes endohydrolysis of 1,4-beta-D-glucosidic linkages in xyloglucan with retention of the beta-configuration of the glycosyl residues. Specific for xyloglucan and does not hydrolyze other cell wall components. In Aspergillus clavatus (strain ATCC 1007 / CBS 513.65 / DSM 816 / NCTC 3887 / NRRL 1 / QM 1276 / 107), this protein is Probable xyloglucan-specific endo-beta-1,4-glucanase A (xgeA).